The primary structure comprises 93 residues: Large ribosomal subunit protein uL23cz/uL23cy (93 aa).

The protein belongs to the universal ribosomal protein uL23 family. As to quaternary structure, part of the 50S ribosomal subunit.

It is found in the plastid. The protein localises to the chloroplast. Binds to 23S rRNA. This chain is Large ribosomal subunit protein uL23cz/uL23cy (rpl23-A), found in Arabidopsis thaliana (Mouse-ear cress).